Reading from the N-terminus, the 541-residue chain is Membrane protein insertase YidC (541 aa).

The next 5 membrane-spanning stretches (helical) occupy residues 6-26, 356-376, 430-450, 463-483, and 498-518; these read FFLI…WEIT, IIHS…LAFY, LPIL…LEMV, LSAP…MFIQ, and IMMA…SGLV.

This sequence belongs to the OXA1/ALB3/YidC family. Type 1 subfamily. Interacts with the Sec translocase complex via SecD. Specifically interacts with transmembrane segments of nascent integral membrane proteins during membrane integration.

The protein resides in the cell inner membrane. Required for the insertion and/or proper folding and/or complex formation of integral membrane proteins into the membrane. Involved in integration of membrane proteins that insert both dependently and independently of the Sec translocase complex, as well as at least some lipoproteins. Aids folding of multispanning membrane proteins. This Vesicomyosocius okutanii subsp. Calyptogena okutanii (strain HA) protein is Membrane protein insertase YidC.